The following is a 254-amino-acid chain: 5-oxoprolinase subunit A (254 aa).

The protein belongs to the LamB/PxpA family. As to quaternary structure, forms a complex composed of PxpA, PxpB and PxpC.

The enzyme catalyses 5-oxo-L-proline + ATP + 2 H2O = L-glutamate + ADP + phosphate + H(+). In terms of biological role, catalyzes the cleavage of 5-oxoproline to form L-glutamate coupled to the hydrolysis of ATP to ADP and inorganic phosphate. The sequence is that of 5-oxoprolinase subunit A from Brevibacillus brevis (strain 47 / JCM 6285 / NBRC 100599).